A 972-amino-acid chain; its full sequence is FHF complex subunit HOOK-interacting protein 1B (972 aa).

2 disordered regions span residues 465–548 (APSP…GELE) and 573–644 (SAPY…SWPE). A Phosphoserine modification is found at Ser-467. Residues 478-501 (RGPGSPSVDSSSVTTVPRPSTPSR) are compositionally biased toward low complexity. 4 positions are modified to phosphoserine: Ser-510, Ser-523, Ser-529, and Ser-533. Residues 523 to 535 (SPGLSASPASSPG) are compositionally biased toward low complexity. 2 positions are modified to phosphoserine: Ser-859 and Ser-897.

This sequence belongs to the FHIP family. Component of the FTS/Hook/FHIP complex (FHF complex), composed of AKTIP/FTS, FHIP1B, and one or more members of the Hook family of proteins HOOK1, HOOK2, and HOOK3. The FHF complex associates with the homotypic vesicular sorting complex (the HOPS complex).

Component of the FTS/Hook/FHIP complex (FHF complex). The FHF complex may function to promote vesicle trafficking and/or fusion via the homotypic vesicular protein sorting complex (the HOPS complex). FHF complex promotes the distribution of AP-4 complex to the perinuclear area of the cell. This Homo sapiens (Human) protein is FHF complex subunit HOOK-interacting protein 1B.